We begin with the raw amino-acid sequence, 307 residues long: Ras-related protein RabR (307 aa).

Residues 1–10 are compositionally biased toward polar residues; that stretch reads MTTTTLLSES. Residues 1–45 are disordered; that stretch reads MTTTTLLSESTNNSNNTNNNTNNNTNNTMNNNNNNNNNNTIGNNN. Positions 11–45 are enriched in low complexity; the sequence is TNNSNNTNNNTNNNTNNTMNNNNNNNNNNTIGNNN. Position 61-68 (61-68) interacts with GTP; it reads GDEEVGKG. The Effector region motif lies at 83–92; it reads ENLYNIEVDR. GTP is bound at residue 122 to 126; the sequence is NFHMH. The segment covering 175–185 has biased composition (low complexity); sequence NFNCQSNSRNS. Positions 175–223 are disordered; the sequence is NFNCQSNSRNSTNYNRHSVGNHCPNSPQKGEKENNTHSSTAPPAPPPLP. Positions 186-202 are enriched in polar residues; that stretch reads TNYNRHSVGNHCPNSPQ. 230–233 is a GTP binding site; it reads NKCD. Cys304 carries the post-translational modification Cysteine methyl ester. Residue Cys304 is the site of S-geranylgeranyl cysteine attachment. Residues 305–307 constitute a propeptide, removed in mature form; sequence NLM.

The protein belongs to the small GTPase superfamily. Rab family.

Its subcellular location is the cell membrane. In Dictyostelium discoideum (Social amoeba), this protein is Ras-related protein RabR (rabR).